We begin with the raw amino-acid sequence, 180 residues long: ATP-dependent protease subunit HslV (180 aa).

Thr5 is a catalytic residue. Residues Gly161, Cys164, and Thr167 each contribute to the Na(+) site.

The protein belongs to the peptidase T1B family. HslV subfamily. As to quaternary structure, a double ring-shaped homohexamer of HslV is capped on each side by a ring-shaped HslU homohexamer. The assembly of the HslU/HslV complex is dependent on binding of ATP.

It is found in the cytoplasm. It carries out the reaction ATP-dependent cleavage of peptide bonds with broad specificity.. With respect to regulation, allosterically activated by HslU binding. Its function is as follows. Protease subunit of a proteasome-like degradation complex believed to be a general protein degrading machinery. The protein is ATP-dependent protease subunit HslV of Campylobacter jejuni subsp. jejuni serotype O:6 (strain 81116 / NCTC 11828).